Consider the following 201-residue polypeptide: Two-component response regulator ORR10 (201 aa).

The region spanning H10–L142 is the Response regulatory domain. D75 bears the 4-aspartylphosphate mark. The interval H149–S201 is disordered. Over residues S158 to N180 the composition is skewed to low complexity.

The protein belongs to the ARR family. Type-A subfamily. Post-translationally, two-component system major event consists of a His-to-Asp phosphorelay between a sensor histidine kinase (HK) and a response regulator (RR). In plants, the His-to-Asp phosphorelay involves an additional intermediate named Histidine-containing phosphotransfer protein (HPt). This multistep phosphorelay consists of a His-Asp-His-Asp sequential transfer of a phosphate group between first a His and an Asp of the HK protein, followed by the transfer to a conserved His of the HPt protein and finally the transfer to an Asp in the receiver domain of the RR protein. As to expression, expressed in mature leaves, and at low levels in roots, shoots and flowers.

Its function is as follows. Functions as a response regulator involved in His-to-Asp phosphorelay signal transduction system. Phosphorylation of the Asp residue in the receiver domain activates the ability of the protein to promote the transcription of target genes. Type-A response regulators seem to act as negative regulators of the cytokinin signaling. The polypeptide is Two-component response regulator ORR10 (Oryza sativa subsp. indica (Rice)).